The chain runs to 802 residues: Outer membrane usher protein CssD (802 aa).

Belongs to the fimbrial export usher family.

It localises to the cell outer membrane. Its function is as follows. Involved in the export and assembly of C6 fimbrial subunits across the outer membrane. The chain is Outer membrane usher protein CssD (cssD) from Escherichia coli.